Here is a 327-residue protein sequence, read N- to C-terminus: Mitochondrial substrate carrier family protein A (327 aa).

The tract at residues 1-36 (MVINNQNNNNQNNNQNNNNKNDNLNNSTTTTTTTAT) is disordered. Over 1-48 (MVINNQNNNNQNNNQNNNNKNDNLNNSTTTTTTTATTTKSSTLFHSND) the chain is Mitochondrial intermembrane. 3 Solcar repeats span residues 43–132 (LFHS…FKRM), 140–224 (ISVI…IKEK), and 233–323 (PPLY…AITL). A helical transmembrane segment spans residues 49-66 (FFSGLIAGIVSRTLTAPL). Topologically, residues 67-106 (ERIKILNQVEVILKDGTKYNRIIPAFKVIIKEEGIAGLFR) are mitochondrial matrix. A helical membrane pass occupies residues 107–127 (GNFVNIIKAGPQSAIRFYSYG). Topologically, residues 128 to 145 (AFKRMASEPDGSISVINR) are mitochondrial intermembrane. Residues 146-166 (MWAGASSGVVSVALTHPLDVI) traverse the membrane as a helical segment. Residues 167 to 192 (KTHITVIAPTAATIKNVTKGIYRDLG) are Mitochondrial matrix-facing. Residues 193 to 213 (IIGFFRGLSAGILNIAPFAAL) form a helical membrane-spanning segment. The Mitochondrial intermembrane segment spans residues 214-238 (NFTFYETIKEKTQQYILKSPPLYAP). The chain crosses the membrane as a helical span at residues 239-259 (SIYGAISGGLTMTILYPLDVV). Residues 260-303 (KRRIMLQHFDRNQLPIYKNFIDAIIKITKTEGISALYKGIRPAY) lie on the Mitochondrial matrix side of the membrane. Residues 304-324 (LKVIPTVSINFLIYEGAITLF) traverse the membrane as a helical segment. The Mitochondrial intermembrane portion of the chain corresponds to 325-327 (EKK).

Belongs to the mitochondrial carrier (TC 2.A.29) family.

Its subcellular location is the mitochondrion inner membrane. Functionally, calcium-dependent mitochondrial solute carrier. Mitochondrial solute carriers shuttle metabolites, nucleotides, and cofactors through the mitochondrial inner membrane. In Dictyostelium discoideum (Social amoeba), this protein is Mitochondrial substrate carrier family protein A (mcfA).